The following is a 680-amino-acid chain: Heterokaryon incompatibility protein 6, OR allele (680 aa).

Its function is as follows. Involved in the non-self-recognition during asexual growth of N.crassa. This process involves restriction of heterokaryon formation via genetic differences at 11 het loci, including mating type. The polypeptide is Heterokaryon incompatibility protein 6, OR allele (het-6) (Neurospora crassa (strain ATCC 24698 / 74-OR23-1A / CBS 708.71 / DSM 1257 / FGSC 987)).